The chain runs to 451 residues: Bifunctional protein GlmU (451 aa).

The tract at residues 1-225 is pyrophosphorylase; it reads MVVVAILAAG…YQEILGINDR (225 aa). UDP-N-acetyl-alpha-D-glucosamine contacts are provided by residues 7 to 10, lysine 21, glutamine 72, and 77 to 78; these read LAAG and GT. Residue aspartate 102 coordinates Mg(2+). Positions 139, 154, 169, and 223 each coordinate UDP-N-acetyl-alpha-D-glucosamine. Residue asparagine 223 coordinates Mg(2+). The segment at 226–246 is linker; that stretch reads LQLATAYEILQRRVKEQWMMA. The segment at 247–451 is N-acetyltransferase; sequence GVTLIDPNSI…PGWRKKSGES (205 aa). Residues arginine 328 and lysine 346 each contribute to the UDP-N-acetyl-alpha-D-glucosamine site. Catalysis depends on histidine 358, which acts as the Proton acceptor. 2 residues coordinate UDP-N-acetyl-alpha-D-glucosamine: tyrosine 361 and asparagine 372. Residues alanine 375, 381 to 382, serine 400, alanine 418, and arginine 435 contribute to the acetyl-CoA site; that span reads NY.

In the N-terminal section; belongs to the N-acetylglucosamine-1-phosphate uridyltransferase family. The protein in the C-terminal section; belongs to the transferase hexapeptide repeat family. Homotrimer. The cofactor is Mg(2+).

The protein resides in the cytoplasm. It catalyses the reaction alpha-D-glucosamine 1-phosphate + acetyl-CoA = N-acetyl-alpha-D-glucosamine 1-phosphate + CoA + H(+). The catalysed reaction is N-acetyl-alpha-D-glucosamine 1-phosphate + UTP + H(+) = UDP-N-acetyl-alpha-D-glucosamine + diphosphate. It participates in nucleotide-sugar biosynthesis; UDP-N-acetyl-alpha-D-glucosamine biosynthesis; N-acetyl-alpha-D-glucosamine 1-phosphate from alpha-D-glucosamine 6-phosphate (route II): step 2/2. The protein operates within nucleotide-sugar biosynthesis; UDP-N-acetyl-alpha-D-glucosamine biosynthesis; UDP-N-acetyl-alpha-D-glucosamine from N-acetyl-alpha-D-glucosamine 1-phosphate: step 1/1. It functions in the pathway bacterial outer membrane biogenesis; LPS lipid A biosynthesis. Functionally, catalyzes the last two sequential reactions in the de novo biosynthetic pathway for UDP-N-acetylglucosamine (UDP-GlcNAc). The C-terminal domain catalyzes the transfer of acetyl group from acetyl coenzyme A to glucosamine-1-phosphate (GlcN-1-P) to produce N-acetylglucosamine-1-phosphate (GlcNAc-1-P), which is converted into UDP-GlcNAc by the transfer of uridine 5-monophosphate (from uridine 5-triphosphate), a reaction catalyzed by the N-terminal domain. This chain is Bifunctional protein GlmU, found in Trichormus variabilis (strain ATCC 29413 / PCC 7937) (Anabaena variabilis).